We begin with the raw amino-acid sequence, 396 residues long: Tryptophan synthase beta chain (396 aa).

Residue lysine 90 is modified to N6-(pyridoxal phosphate)lysine.

This sequence belongs to the TrpB family. Tetramer of two alpha and two beta chains. It depends on pyridoxal 5'-phosphate as a cofactor.

It catalyses the reaction (1S,2R)-1-C-(indol-3-yl)glycerol 3-phosphate + L-serine = D-glyceraldehyde 3-phosphate + L-tryptophan + H2O. It functions in the pathway amino-acid biosynthesis; L-tryptophan biosynthesis; L-tryptophan from chorismate: step 5/5. Its function is as follows. The beta subunit is responsible for the synthesis of L-tryptophan from indole and L-serine. The protein is Tryptophan synthase beta chain of Clostridium kluyveri (strain NBRC 12016).